The sequence spans 241 residues: ATP synthase subunit a (241 aa).

The next 5 helical transmembrane spans lie at Gly30 to Gly50, Leu89 to Ile109, Ile128 to Ser148, Leu193 to Leu213, and Gly214 to Gly234.

Belongs to the ATPase A chain family. As to quaternary structure, F-type ATPases have 2 components, CF(1) - the catalytic core - and CF(0) - the membrane proton channel. CF(1) has five subunits: alpha(3), beta(3), gamma(1), delta(1), epsilon(1). CF(0) has four main subunits: a, b, b' and c.

The protein localises to the cellular thylakoid membrane. Functionally, key component of the proton channel; it plays a direct role in the translocation of protons across the membrane. The chain is ATP synthase subunit a from Synechococcus sp. (strain CC9311).